The sequence spans 156 residues: ATP synthase subunit b (156 aa).

The chain crosses the membrane as a helical span at residues 7–27 (FFAQMVVFFILWWVVAKFIWP).

Belongs to the ATPase B chain family. F-type ATPases have 2 components, F(1) - the catalytic core - and F(0) - the membrane proton channel. F(1) has five subunits: alpha(3), beta(3), gamma(1), delta(1), epsilon(1). F(0) has three main subunits: a(1), b(2) and c(10-14). The alpha and beta chains form an alternating ring which encloses part of the gamma chain. F(1) is attached to F(0) by a central stalk formed by the gamma and epsilon chains, while a peripheral stalk is formed by the delta and b chains.

The protein resides in the cell inner membrane. Its function is as follows. F(1)F(0) ATP synthase produces ATP from ADP in the presence of a proton or sodium gradient. F-type ATPases consist of two structural domains, F(1) containing the extramembraneous catalytic core and F(0) containing the membrane proton channel, linked together by a central stalk and a peripheral stalk. During catalysis, ATP synthesis in the catalytic domain of F(1) is coupled via a rotary mechanism of the central stalk subunits to proton translocation. Functionally, component of the F(0) channel, it forms part of the peripheral stalk, linking F(1) to F(0). This chain is ATP synthase subunit b, found in Cupriavidus necator (strain ATCC 17699 / DSM 428 / KCTC 22496 / NCIMB 10442 / H16 / Stanier 337) (Ralstonia eutropha).